The chain runs to 249 residues: DNA polymerase sliding clamp (249 aa).

It belongs to the PCNA family. As to quaternary structure, homotrimer. The subunits circularize to form a toroid; DNA passes through its center. Replication factor C (RFC) is required to load the toroid on the DNA.

Functionally, sliding clamp subunit that acts as a moving platform for DNA processing. Responsible for tethering the catalytic subunit of DNA polymerase and other proteins to DNA during high-speed replication. This is DNA polymerase sliding clamp from Pyrococcus horikoshii (strain ATCC 700860 / DSM 12428 / JCM 9974 / NBRC 100139 / OT-3).